The chain runs to 879 residues: Alanine--tRNA ligase (879 aa).

The Zn(2+) site is built by histidine 566, histidine 570, cysteine 668, and histidine 672.

The protein belongs to the class-II aminoacyl-tRNA synthetase family. Zn(2+) is required as a cofactor.

It localises to the cytoplasm. It catalyses the reaction tRNA(Ala) + L-alanine + ATP = L-alanyl-tRNA(Ala) + AMP + diphosphate. Its function is as follows. Catalyzes the attachment of alanine to tRNA(Ala) in a two-step reaction: alanine is first activated by ATP to form Ala-AMP and then transferred to the acceptor end of tRNA(Ala). Also edits incorrectly charged Ser-tRNA(Ala) and Gly-tRNA(Ala) via its editing domain. The polypeptide is Alanine--tRNA ligase (Listeria monocytogenes serovar 1/2a (strain ATCC BAA-679 / EGD-e)).